Consider the following 510-residue polypeptide: Zinc finger and SCAN domain-containing protein 18 (510 aa).

The disordered stretch occupies residues 1-40 (MLPLEKAFASPRSSPAPPDLPTPGSAAGVQQEEPETIPER). In terms of domain architecture, SCAN box spans 49–131 (RLRFREFVYQ…SLVEGLADVL (83 aa)). Disordered regions lie at residues 172–191 (ALGA…SPDP), 201–231 (EAKT…EWGH), 263–413 (TEEL…GKPY), and 461–510 (KTHE…EAQR). Composition is skewed to basic and acidic residues over residues 214–231 (QKLK…EWGH) and 263–273 (TEELRLVERDP). Over residues 288–299 (AGCACEEAAPAG) the composition is skewed to low complexity. A compositionally biased stretch (polar residues) spans 344–356 (DSATGSQRQSVIQ). 2 consecutive C2H2-type zinc fingers follow at residues 413 to 435 (YACG…HSSH) and 441 to 463 (YACQ…QKTH). Positions 491–501 (GGPPESVEGEA) are enriched in low complexity.

Belongs to the krueppel C2H2-type zinc-finger protein family.

The protein localises to the nucleus. Its function is as follows. May be involved in transcriptional regulation. This Homo sapiens (Human) protein is Zinc finger and SCAN domain-containing protein 18 (ZSCAN18).